We begin with the raw amino-acid sequence, 413 residues long: Peptidase T (413 aa).

His-82 is a Zn(2+) binding site. The active site involves Asp-84. Residue Asp-145 participates in Zn(2+) binding. Glu-179 (proton acceptor) is an active-site residue. Residues Glu-180, Asp-202, and His-384 each contribute to the Zn(2+) site.

It belongs to the peptidase M20B family. Zn(2+) serves as cofactor.

It localises to the cytoplasm. It carries out the reaction Release of the N-terminal residue from a tripeptide.. Functionally, cleaves the N-terminal amino acid of tripeptides. The chain is Peptidase T from Latilactobacillus sakei subsp. sakei (strain 23K) (Lactobacillus sakei subsp. sakei).